The primary structure comprises 184 residues: Oligoribonuclease (184 aa).

One can recognise an Exonuclease domain in the interval 7–170 (LIWIDLEMTG…DDIYESIEEL (164 aa)). Y128 is an active-site residue.

This sequence belongs to the oligoribonuclease family.

The protein localises to the cytoplasm. 3'-to-5' exoribonuclease specific for small oligoribonucleotides. This is Oligoribonuclease from Hydrogenovibrio crunogenus (strain DSM 25203 / XCL-2) (Thiomicrospira crunogena).